Here is a 542-residue protein sequence, read N- to C-terminus: MTRYIFVTGGVVSSLGKGIASASLAAILEARGLKVTMLKLDPYINVDPGTMSPFQHGEVFVTHDGAETDLDLGHYERFIRTTMTQNNNFTTGRIYEHVLRKERRGDYLGATIQVIPHITDEIKRRIIKGAGDADVALVEIGGTVGDIESQPFLEAIRQLRVEVGSKRAMLMHLTLVPYIATAGETKTKPTQHSVKELRSIGLQPDVLICRSDHPVDASSRRKIALFTNVEERAVISLEDVDTIYKIPGVLHAQGLDDFVVERFGLQCNGADLSEWDKVVDAKLNPEHEVTIAMVGKYMELLDAYKSLIEAMSHAGITNRTKVNLRYIDSEDIENQGTSLLEGADAILVPGGFGLRGVEGKITAVQYARENKVPYLGICLGMQVAVIEFARNVMGWKDANSTEFDRNSGHPVVGLITEWADATGAVETRDEASDLGGTMRLGAQDCQLAAGSKVHDCYGKDVITERHRHRYEVNNNLLPQLVDAGLVVSGRSEDGALVEVVESKDHPWFVACQFHPEFTSTPRDGHPLFSGFVKAALAQKNKA.

Residues 1–265 (MTRYIFVTGG…DDFVVERFGL (265 aa)) form an amidoligase domain region. Position 13 (S13) interacts with CTP. Residue S13 participates in UTP binding. Residues 14 to 19 (SLGKGI) and D71 contribute to the ATP site. Mg(2+)-binding residues include D71 and E139. Residues 146–148 (DIE), 186–191 (KTKPTQ), and K222 contribute to the CTP site. UTP is bound by residues 186 to 191 (KTKPTQ) and K222. The Glutamine amidotransferase type-1 domain maps to 290–541 (TIAMVGKYME…VKAALAQKNK (252 aa)). Position 351 (G351) interacts with L-glutamine. Residue C378 is the Nucleophile; for glutamine hydrolysis of the active site. Residues 379–382 (LGMQ), E402, and R469 each bind L-glutamine. Catalysis depends on residues H514 and E516.

Belongs to the CTP synthase family. As to quaternary structure, homotetramer.

It carries out the reaction UTP + L-glutamine + ATP + H2O = CTP + L-glutamate + ADP + phosphate + 2 H(+). The catalysed reaction is L-glutamine + H2O = L-glutamate + NH4(+). The enzyme catalyses UTP + NH4(+) + ATP = CTP + ADP + phosphate + 2 H(+). It participates in pyrimidine metabolism; CTP biosynthesis via de novo pathway; CTP from UDP: step 2/2. With respect to regulation, allosterically activated by GTP, when glutamine is the substrate; GTP has no effect on the reaction when ammonia is the substrate. The allosteric effector GTP functions by stabilizing the protein conformation that binds the tetrahedral intermediate(s) formed during glutamine hydrolysis. Inhibited by the product CTP, via allosteric rather than competitive inhibition. Its function is as follows. Catalyzes the ATP-dependent amination of UTP to CTP with either L-glutamine or ammonia as the source of nitrogen. Regulates intracellular CTP levels through interactions with the four ribonucleotide triphosphates. The protein is CTP synthase of Pseudomonas putida (strain GB-1).